The chain runs to 79 residues: ATP synthase subunit beta (79 aa).

This sequence belongs to the ATPase alpha/beta chains family. F-type ATPases have 2 components, CF(1) - the catalytic core - and CF(0) - the membrane proton channel. CF(1) has five subunits: alpha(3), beta(3), gamma(1), delta(1), epsilon(1). CF(0) has three main subunits: a(1), b(2) and c(9-12). The alpha and beta chains form an alternating ring which encloses part of the gamma chain. CF(1) is attached to CF(0) by a central stalk formed by the gamma and epsilon chains, while a peripheral stalk is formed by the delta and b chains.

The protein resides in the cell membrane. It catalyses the reaction ATP + H2O + 4 H(+)(in) = ADP + phosphate + 5 H(+)(out). Produces ATP from ADP in the presence of a proton gradient across the membrane. The catalytic sites are hosted primarily by the beta subunits. The protein is ATP synthase subunit beta (atpD) of Streptococcus downei (Streptococcus sobrinus).